The primary structure comprises 663 residues: Alpha-amylase MalA (663 aa).

2 disordered regions span residues M1–T28 and G80–R135. The span at R92–G111 shows a compositional bias: gly residues. Catalysis depends on D411, which acts as the Nucleophile. E440 serves as the catalytic Proton donor.

This sequence belongs to the glycosyl hydrolase 13 family.

It localises to the cytoplasm. It carries out the reaction Endohydrolysis of (1-&gt;4)-alpha-D-glucosidic linkages in polysaccharides containing three or more (1-&gt;4)-alpha-linked D-glucose units.. Its pathway is glycan degradation; starch degradation. Its activity is regulated as follows. Stable and active over a broad range of NaCl concentrations (0.5 to 4.2 M NaCl), with maximal activity at 2.6 M NaCl. 83% and 94% of the maximum activity at 0.6 and 4.2 M NaCl, respectively. Active and stable also in KCl. Alpha-amylase that cleaves starch into oligosaccharides, the first step in starch degradation. Endo-acting enzyme which prefers a linear polysaccharide to branched polysaccharides hydrolyzing alpha-1,4 glucosidic bonds efficiently. Also has transglycosylation activity, but does not act on alpha-1,6 bonds. Higher activities of 100%, 79% and 67.8% against amylose, soluble starch and amylopectin, respectively. Lower activity of 22% against glycogen and faint or no activity against alpha-, beta- and gamma-cyclodextrin. The polypeptide is Alpha-amylase MalA (Haloarcula japonica (strain ATCC 49778 / DSM 6131 / JCM 7785 / NBRC 101032 / NCIMB 13157 / TR-1)).